The primary structure comprises 419 residues: UDP-N-acetylglucosamine 1-carboxyvinyltransferase (419 aa).

Position 22–23 (22–23) interacts with phosphoenolpyruvate; it reads KN. Arginine 92 provides a ligand contact to UDP-N-acetyl-alpha-D-glucosamine. Residue cysteine 116 is the Proton donor of the active site. Cysteine 116 is subject to 2-(S-cysteinyl)pyruvic acid O-phosphothioketal. Aspartate 306 and isoleucine 328 together coordinate UDP-N-acetyl-alpha-D-glucosamine.

Belongs to the EPSP synthase family. MurA subfamily.

It is found in the cytoplasm. The enzyme catalyses phosphoenolpyruvate + UDP-N-acetyl-alpha-D-glucosamine = UDP-N-acetyl-3-O-(1-carboxyvinyl)-alpha-D-glucosamine + phosphate. The protein operates within cell wall biogenesis; peptidoglycan biosynthesis. Functionally, cell wall formation. Adds enolpyruvyl to UDP-N-acetylglucosamine. The protein is UDP-N-acetylglucosamine 1-carboxyvinyltransferase of Pseudoalteromonas translucida (strain TAC 125).